A 123-amino-acid polypeptide reads, in one-letter code: Ribosome-binding factor A (123 aa).

Belongs to the RbfA family. Monomer. Binds 30S ribosomal subunits, but not 50S ribosomal subunits or 70S ribosomes.

The protein resides in the cytoplasm. Its function is as follows. One of several proteins that assist in the late maturation steps of the functional core of the 30S ribosomal subunit. Associates with free 30S ribosomal subunits (but not with 30S subunits that are part of 70S ribosomes or polysomes). Required for efficient processing of 16S rRNA. May interact with the 5'-terminal helix region of 16S rRNA. The protein is Ribosome-binding factor A of Lactobacillus johnsonii (strain CNCM I-12250 / La1 / NCC 533).